Here is a 209-residue protein sequence, read N- to C-terminus: Ribosomal RNA large subunit methyltransferase E (209 aa).

Glycine 63, tryptophan 65, aspartate 83, aspartate 99, and aspartate 124 together coordinate S-adenosyl-L-methionine. Lysine 164 acts as the Proton acceptor in catalysis.

Belongs to the class I-like SAM-binding methyltransferase superfamily. RNA methyltransferase RlmE family.

Its subcellular location is the cytoplasm. The catalysed reaction is uridine(2552) in 23S rRNA + S-adenosyl-L-methionine = 2'-O-methyluridine(2552) in 23S rRNA + S-adenosyl-L-homocysteine + H(+). Its function is as follows. Specifically methylates the uridine in position 2552 of 23S rRNA at the 2'-O position of the ribose in the fully assembled 50S ribosomal subunit. The sequence is that of Ribosomal RNA large subunit methyltransferase E from Pseudoalteromonas atlantica (strain T6c / ATCC BAA-1087).